The chain runs to 451 residues: MVSWDKAHLGPKYVGLWDFKARTDEELSFQAGDLLHVTKKEELWWWATLLDAEGKALAEGYVPHNYLAEKETVESEPWFFGCISRSEAMHRLQAEDNSKGAFLIRVSQKPGADYVLSVRDAQAVRHYRIWKNNEGRLHLNEAVSFSNLSELVDYHKTQSLSHGLQLSMPCWKHKTEPLPHWDDWERPREEFTLCKKLGAGYFGEVFEALWKGQVHVAVKVISRDNLLHQHTFQAEIQAMKKLRHKHILSLYAVATAGDPVYIITELMPKGNLLQLLRDSDEKALPILELVDFASQVAEGMCYLESQNYIHRDLAARNVLVTENNLCKVGDFGLARLVKEDIYLSHEHNVPYKWTAPEALSRGHYSIKSDVWSFGVLLHEIFSRGQMPYPGMSNHETFLRVDAGYRMPCPLECPPNIHKLMLSCWSRDPKQRPCFKDLCEKLTGITRYENLV.

The SH3 domain maps to 8-72 (HLGPKYVGLW…PHNYLAEKET (65 aa)). Phosphotyrosine is present on residues Tyr-13, Tyr-61, Tyr-66, and Tyr-114. Residues 78 to 170 (WFFGCISRSE…SHGLQLSMPC (93 aa)) form the SH2 domain. Residues 171-190 (WKHKTEPLPHWDDWERPREE) form a linker region. Positions 191-445 (FTLCKKLGAG…DLCEKLTGIT (255 aa)) constitute a Protein kinase domain. Residues 197 to 205 (LGAGYFGEV) and Lys-219 each bind ATP. Asp-312 acts as the Proton acceptor in catalysis. The residue at position 342 (Tyr-342) is a Phosphotyrosine; by autocatalysis. Residues Tyr-351 and Tyr-447 each carry the phosphotyrosine modification.

The protein belongs to the protein kinase superfamily. Tyr protein kinase family. BRK/PTK6/SIK subfamily. Interacts with KHDRBS1. Interacts with phosphorylated IRS4. Interacts with GAP-A.p65. Interacts with ADAM15. Interacts (via SH3 and SH2 domains) with phosphorylated IRS4. Interacts (via SH3 domain) with SFPQ. Interacts with EGFR and ERBB2. Interacts with STAP2. Interacts with PNX. Interacts with SFPQ. Interacts with PTK/ATK. Interacts with CTNNB1. Post-translationally, autophosphorylated. Autophosphorylation of Tyr-342 leads to an increase of kinase activity. Tyr-447 binds to the SH2 domain when phosphorylated and negatively regulates kinase activity. Expressed only in epithelial tissues, including the skin and lining of the alimentary canal. Restricted to the cell layers immediately above the proliferative cell zone in these epithelia.

Its subcellular location is the cytoplasm. It is found in the nucleus. The protein resides in the membrane. The protein localises to the cell projection. It localises to the ruffle. The catalysed reaction is L-tyrosyl-[protein] + ATP = O-phospho-L-tyrosyl-[protein] + ADP + H(+). Activated by EGF, NRG1 and IGF1. Inhibited by SOCS3 to phosphorylate STAT3. Stabilized in the inactive form by an association between the SH3 domain and the SH2-TK linker region. Interaction between Trp-184 within SH2-TK linker region and the catalytic domain appears essential for positive regulation of kinase activity. Functionally, non-receptor tyrosine-protein kinase implicated in the regulation of a variety of signaling pathways that control the differentiation and maintenance of normal epithelia, as well as tumor growth. Function seems to be context dependent and differ depending on cell type, as well as its intracellular localization. A number of potential nuclear and cytoplasmic substrates have been identified. These include the RNA-binding proteins: KHDRBS1/SAM68, KHDRBS2/SLM1, KHDRBS3/SLM2 and SFPQ/PSF; transcription factors: STAT3 and STAT5A/B and a variety of signaling molecules: ARHGAP35/p190RhoGAP, PXN/paxillin, BTK/ATK, STAP2/BKS. Phosphorylates the GTPase-activating protein ARAP1 following EGF stimulation which enhances EGFR signaling by delaying EGFR down-regulation. Also associates with a variety of proteins that are likely upstream of PTK6 in various signaling pathways, or for which PTK6 may play an adapter-like role. These proteins include ADAM15, EGFR, ERBB2, ERBB3 and IRS4. In normal or non-tumorigenic tissues, PTK6 promotes cellular differentiation and apoptosis. In tumors PTK6 contributes to cancer progression by sensitizing cells to mitogenic signals and enhancing proliferation, anchorage-independent survival and migration/invasion. Association with EGFR, ERBB2, ERBB3 may contribute to mammary tumor development and growth through enhancement of EGF-induced signaling via BTK/AKT and PI3 kinase. Contributes to migration and proliferation by contributing to EGF-mediated phosphorylation of ARHGAP35/p190RhoGAP, which promotes association with RASA1/p120RasGAP, inactivating RhoA while activating RAS. EGF stimulation resulted in phosphorylation of PNX/Paxillin by PTK6 and activation of RAC1 via CRK/CrKII, thereby promoting migration and invasion. PTK6 activates STAT3 and STAT5B to promote proliferation. Nuclear PTK6 may be important for regulating growth in normal epithelia, while cytoplasmic PTK6 might activate oncogenic signaling pathways. The protein is Protein-tyrosine kinase 6 (Ptk6) of Mus musculus (Mouse).